A 119-amino-acid chain; its full sequence is Large ribosomal subunit protein uL14 (119 aa).

This sequence belongs to the universal ribosomal protein uL14 family. Part of the 50S ribosomal subunit. Forms a cluster with proteins L3 and L19. In the 70S ribosome, L14 and L19 interact and together make contacts with the 16S rRNA in bridges B5 and B8.

Binds to 23S rRNA. Forms part of two intersubunit bridges in the 70S ribosome. In Wolbachia pipientis wMel, this protein is Large ribosomal subunit protein uL14.